The chain runs to 299 residues: ATP phosphoribosyltransferase (299 aa).

It belongs to the ATP phosphoribosyltransferase family. Long subfamily. In terms of assembly, equilibrium between an active dimeric form, an inactive hexameric form and higher aggregates. Interconversion between the various forms is largely reversible and is influenced by the natural substrates and inhibitors of the enzyme. Mg(2+) is required as a cofactor.

The protein resides in the cytoplasm. The catalysed reaction is 1-(5-phospho-beta-D-ribosyl)-ATP + diphosphate = 5-phospho-alpha-D-ribose 1-diphosphate + ATP. The protein operates within amino-acid biosynthesis; L-histidine biosynthesis; L-histidine from 5-phospho-alpha-D-ribose 1-diphosphate: step 1/9. Feedback inhibited by histidine. Catalyzes the condensation of ATP and 5-phosphoribose 1-diphosphate to form N'-(5'-phosphoribosyl)-ATP (PR-ATP). Has a crucial role in the pathway because the rate of histidine biosynthesis seems to be controlled primarily by regulation of HisG enzymatic activity. The chain is ATP phosphoribosyltransferase from Escherichia fergusonii (strain ATCC 35469 / DSM 13698 / CCUG 18766 / IAM 14443 / JCM 21226 / LMG 7866 / NBRC 102419 / NCTC 12128 / CDC 0568-73).